A 282-amino-acid chain; its full sequence is MDSSHIAVRVARRSPSPAAVSQSSYGSLGSSQDIHIRVDKEGVASESTPLLAAAQRSIKTSSSLTASVSASSTTPSNCRRNPTLHEDCFNWRSVGLLVMCASALALAAYLLWRQTQTPDFGYRLSIVGHGIWSDMELQGRGTLFDPIGVGTVIFTHTGSNECHDDCPDVLHKLERSHVGELPYNFLVAGDCQVFEAQGWHYRSQYPRDLNGIDSLVMAFVGNFSGRPPIDCQLMAAQALILESLKRRILQPIYQLFVLGSYTDALQRELRHWPHYASHQTSK.

A disordered region spans residues 1–29 (MDSSHIAVRVARRSPSPAAVSQSSYGSLG). Residues 1 to 88 (MDSSHIAVRV…RRNPTLHEDC (88 aa)) lie on the Cytoplasmic side of the membrane. Residues 89–111 (FNWRSVGLLVMCASALALAAYLL) form a helical membrane-spanning segment. Over 112–282 (WRQTQTPDFG…PHYASHQTSK (171 aa)) the chain is Extracellular. A disulfide bridge links C162 with C166. Residue N222 is glycosylated (N-linked (GlcNAc...) asparagine).

The protein belongs to the N-acetylmuramoyl-L-alanine amidase 2 family. Expressed in uninduced hemocytes and mbn-2 cells.

It localises to the cell membrane. In terms of biological role, peptidoglycan-recognition protein probably involved in innate immunity by binding to peptidoglycans (PGN) of bacteria and activating the immune response. The sequence is that of Peptidoglycan-recognition protein LD (PGRP-LD) from Drosophila melanogaster (Fruit fly).